We begin with the raw amino-acid sequence, 284 residues long: Probable endonuclease 4 (284 aa).

Positions 69, 113, 148, 182, 185, 217, 230, 232, and 262 each coordinate Zn(2+).

The protein belongs to the AP endonuclease 2 family. It depends on Zn(2+) as a cofactor.

It carries out the reaction Endonucleolytic cleavage to 5'-phosphooligonucleotide end-products.. Its function is as follows. Endonuclease IV plays a role in DNA repair. It cleaves phosphodiester bonds at apurinic or apyrimidinic (AP) sites, generating a 3'-hydroxyl group and a 5'-terminal sugar phosphate. The sequence is that of Probable endonuclease 4 from Bifidobacterium longum subsp. infantis (strain ATCC 15697 / DSM 20088 / JCM 1222 / NCTC 11817 / S12).